The following is a 143-amino-acid chain: Small ribosomal subunit protein bS18m (143 aa).

This sequence belongs to the bacterial ribosomal protein bS18 family. In terms of assembly, component of the mitochondrial ribosome small subunit (28S) which comprises a 12S rRNA and about 30 distinct proteins.

It is found in the mitochondrion. This Bos taurus (Bovine) protein is Small ribosomal subunit protein bS18m (MRPS18C).